Here is a 680-residue protein sequence, read N- to C-terminus: NADPH--cytochrome P450 reductase (680 aa).

Residues 1–5 are Lumenal-facing; sequence MALDK. The chain crosses the membrane as a helical span at residues 6-23; it reads LDLYVIIVLAVAVAAYFA. The Cytoplasmic portion of the chain corresponds to 24 to 680; that stretch reads KNQFLDQPQD…VQNRYQEDVW (657 aa). The Flavodoxin-like domain maps to 60-204; it reads TLLLFGSQTG…DFLTWKDNVF (145 aa). FMN is bound by residues 66-71, 117-120, 152-161, and D187; these read SQTGTA, ATYG, and LGNSTYEFYN. The FAD-binding FR-type domain occupies 264 to 509; sequence THPYLAKISK…SGPRNKFNKF (246 aa). An NADP(+)-binding site is contributed by R283. FAD-binding positions include 439–442, 457–459, and 473–476; these read RYYS, TAV, and GVVT. Residues T537, 599–600, 606–610, and D642 contribute to the NADP(+) site; these read SR and KVYVQ. An FAD-binding site is contributed by W680.

The protein belongs to the NADPH--cytochrome P450 reductase family. It in the N-terminal section; belongs to the flavodoxin family. In the C-terminal section; belongs to the flavoprotein pyridine nucleotide cytochrome reductase family. FAD is required as a cofactor. The cofactor is FMN.

It localises to the endoplasmic reticulum membrane. It is found in the mitochondrion outer membrane. The protein localises to the cell membrane. The catalysed reaction is 2 oxidized [cytochrome P450] + NADPH = 2 reduced [cytochrome P450] + NADP(+) + H(+). Functionally, this enzyme is required for electron transfer from NADP to cytochrome P450 in microsomes. It can also provide electron transfer to heme oxygenase and cytochrome B5. Involved in ergosterol biosynthesis. The chain is NADPH--cytochrome P450 reductase from Candida maltosa (Yeast).